A 423-amino-acid polypeptide reads, in one-letter code: Serine hydroxymethyltransferase (423 aa).

121–123 lines the (6S)-5,6,7,8-tetrahydrofolate pocket; that stretch reads GHI. At Lys-227 the chain carries N6-(pyridoxal phosphate)lysine. Glu-242 contributes to the (6S)-5,6,7,8-tetrahydrofolate binding site.

The protein belongs to the SHMT family. Homodimer. Requires pyridoxal 5'-phosphate as cofactor.

The protein resides in the cytoplasm. It carries out the reaction 5,10-methylenetetrahydromethanopterin + glycine + H2O = 5,6,7,8-tetrahydromethanopterin + L-serine. It participates in amino-acid biosynthesis; glycine biosynthesis; glycine from L-serine: step 1/1. In terms of biological role, catalyzes the reversible interconversion of serine and glycine with tetrahydromethanopterin (H4MPT) serving as the one-carbon carrier. Also exhibits a pteridine-independent aldolase activity toward beta-hydroxyamino acids, producing glycine and aldehydes, via a retro-aldol mechanism. The chain is Serine hydroxymethyltransferase from Methanothermobacter marburgensis (strain ATCC BAA-927 / DSM 2133 / JCM 14651 / NBRC 100331 / OCM 82 / Marburg) (Methanobacterium thermoautotrophicum).